Consider the following 359-residue polypeptide: Alpha-2-HS-glycoprotein (359 aa).

A signal peptide spans 1–18; sequence MKSFVLLFCLAQLWGCHS. A Cystatin fetuin-A-type 1 domain is found at 27 to 133; the sequence is YKEPACDDPD…QFSVLFTKCD (107 aa). 6 disulfide bridges follow: Cys32-Cys350, Cys89-Cys100, Cys114-Cys132, Cys146-Cys149, Cys208-Cys219, and Cys230-Cys248. The N-linked (GlcNAc...) asparagine glycan is linked to Asn99. Phosphoserine is present on residues Ser134, Ser135, and Ser138. One can recognise a Cystatin fetuin-A-type 2 domain in the interval 144–256; sequence KLCPDCPLLA…TCTLFQTQPV (113 aa). Asn156 and Asn176 each carry an N-linked (GlcNAc...) asparagine glycan. Residues 257–285 form a disordered region; it reads IPQPQPDGAEAEAPSAVPDAAGPTPSAAG. An O-linked (GalNAc...) serine glycan is attached at Ser271. A compositionally biased stretch (low complexity) spans 276–285; sequence AAGPTPSAAG. Thr280 is a glycosylation site (O-linked (GalNAc...) threonine). O-linked (GalNAc...) serine glycans are attached at residues Ser282 and Ser296. Phosphothreonine is present on Thr314. A phosphoserine mark is found at Ser316, Ser320, Ser323, and Ser325. A glycan (O-linked (GalNAc...) threonine) is linked at Thr334. O-linked (GalNAc...) serine; partial glycosylation is present at Ser341.

This sequence belongs to the fetuin family. Post-translationally, phosphorylated by FAM20C in the extracellular medium. As to expression, liver and bone.

Its subcellular location is the secreted. Promotes endocytosis, possesses opsonic properties and influences the mineral phase of bone. Suggested to have lymphocyte stimulating properties, lipid binding capability and to bind thyroid hormone. The sequence is that of Alpha-2-HS-glycoprotein (AHSG) from Bos taurus (Bovine).